Here is an 834-residue protein sequence, read N- to C-terminus: DNA polymerase I, thermostable (834 aa).

Residues 176-262 enclose the 5'-3' exonuclease domain; it reads KPEQWVDFRA…DLPLEVDLAQ (87 aa). A polymerase region spans residues 412–834; it reads ERLHRNLLKR…MGEDWLSAKG (423 aa).

Belongs to the DNA polymerase type-A family.

It carries out the reaction DNA(n) + a 2'-deoxyribonucleoside 5'-triphosphate = DNA(n+1) + diphosphate. Functionally, has 5'-3' exonuclease activity and no 3'-5' exonuclease activity. The chain is DNA polymerase I, thermostable (polA) from Thermus caldophilus.